A 275-amino-acid chain; its full sequence is Nitrogenase iron protein 1 (275 aa).

Residue 9-16 coordinates ATP; it reads GKGGIGKS. Residue C98 coordinates [4Fe-4S] cluster. An ADP-ribosylarginine; by dinitrogenase reductase ADP-ribosyltransferase modification is found at R101. C132 is a binding site for [4Fe-4S] cluster.

Belongs to the NifH/BchL/ChlL family. As to quaternary structure, homodimer. The cofactor is [4Fe-4S] cluster. In terms of processing, the reversible ADP-ribosylation of Arg-101 inactivates the nitrogenase reductase and regulates nitrogenase activity.

It carries out the reaction N2 + 8 reduced [2Fe-2S]-[ferredoxin] + 16 ATP + 16 H2O = H2 + 8 oxidized [2Fe-2S]-[ferredoxin] + 2 NH4(+) + 16 ADP + 16 phosphate + 6 H(+). The key enzymatic reactions in nitrogen fixation are catalyzed by the nitrogenase complex, which has 2 components: the iron protein and the molybdenum-iron protein. This Methanobacterium ivanovii protein is Nitrogenase iron protein 1 (nifH1).